The chain runs to 663 residues: Protein-arginine deiminase type-4 (663 aa).

8 residues coordinate Ca(2+): Asn153, Asp155, Asp157, Asp165, Asp168, Glu170, Asp176, and Asp179. 3 positions are modified to citrulline: Arg205, Arg212, and Arg218. Gln349 lines the Ca(2+) pocket. Residue Asp350 is part of the active site. Positions 351, 353, 369, and 370 each coordinate Ca(2+). Arg372 carries the post-translational modification Citrulline. Position 373 (Asn373) interacts with Ca(2+). Citrulline is present on residues Arg374 and Arg383. Arg374 contacts substrate. Residues Asp388, Phe407, Leu410, and Glu411 each coordinate Ca(2+). Active-site residues include His471 and Asp473. Arg639 is a substrate binding site. Cys645 is a catalytic residue.

The protein belongs to the protein arginine deiminase family. The cofactor is Ca(2+). Post-translationally, autocitrullination at Arg-372 and Arg-374 inactivates the enzyme. Expressed in eosinophils and neutrophils, not expressed in peripheral monocytes or lymphocytes.

The protein resides in the cytoplasm. It is found in the nucleus. The protein localises to the cytoplasmic granule. It catalyses the reaction L-arginyl-[protein] + H2O = L-citrullyl-[protein] + NH4(+). With respect to regulation, strongly Inhibited by F-amidine and N-alpha-benzoyl-N5-(2-chloro-1-iminoethyl)-L-ornithine amide (Cl-amidine). These inhibitors are however not specific to PADI4 and also inhibit other members of the family. Incorporation of a carboxylate ortho to the backbone amide of Cl-amidine results in inhibitors with increased specificity for PADI4: N-alpha-(2-carboxyl)benzoyl-N(5)-(2-fluoro-1-iminoethyl)-L-ornithine amide (o-F-amidine) and N-alpha-(2-carboxyl)benzoyl-N(5)-(2-chloro-1-iminoethyl)-L-ornithine amide (o-Cl-amidine). Strongly and specifically inhibited by Thr-Asp-F-amidine (TDFA); other members of the family are not inhibited. Functionally, catalyzes the citrullination/deimination of arginine residues of proteins such as histones, thereby playing a key role in histone code and regulation of stem cell maintenance. Citrullinates histone H1 at 'Arg-54' (to form H1R54ci), histone H3 at 'Arg-2', 'Arg-8', 'Arg-17' and/or 'Arg-26' (to form H3R2ci, H3R8ci, H3R17ci, H3R26ci, respectively) and histone H4 at 'Arg-3' (to form H4R3ci). Acts as a key regulator of stem cell maintenance by mediating citrullination of histone H1: citrullination of 'Arg-54' of histone H1 (H1R54ci) results in H1 displacement from chromatin and global chromatin decondensation, thereby promoting pluripotency and stem cell maintenance. Promotes profound chromatin decondensation during the innate immune response to infection in neutrophils by mediating formation of H1R54ci. Required for the formation of neutrophil extracellular traps (NETs); NETs are mainly composed of DNA fibers and are released by neutrophils to bind pathogens during inflammation. Citrullination of histone H3 prevents their methylation by CARM1 and HRMT1L2/PRMT1 and represses transcription. Citrullinates EP300/P300 at 'Arg-2142', which favors its interaction with NCOA2/GRIP1. This Homo sapiens (Human) protein is Protein-arginine deiminase type-4 (PADI4).